The chain runs to 199 residues: uncharacterized protein (199 aa).

Helical transmembrane passes span 40 to 60 (LLIC…FCFL), 86 to 106 (VLTG…TFPF), 117 to 137 (TSWP…LTSS), and 166 to 186 (FLLA…ALIL).

Its subcellular location is the membrane. This is an uncharacterized protein from Saccharomyces cerevisiae (strain ATCC 204508 / S288c) (Baker's yeast).